The chain runs to 536 residues: MSAKQLMFNENARHALLEGVNKVANTVKITLGPKGRNVVLDKAGGPVVTNDGVTIAKEIELKDKFENVGAKLIKEVASKTQDTTGDGTTTATVLAQAMITEGIKNITAGANPIEIKKGILKAVDAAVASIKAKSIEVKDKETINRIAIISANNDEEIGNLISEAMDRVGYNGVITVENSKTLETTLEHVEGMQFDRGYISPYMVTDQERRVVEFEEPYILITDRKISSLKTLIPVLEMIAQSGKPLLIIADDVDGEAQTALILNIIRGAIKVCAVKAPEFGDVRKEVLQDIAILTGGTVISEERNLAIEDVTLDMLGQARTVKVDQDKTTIVGGKGKKSDIDTRKKLIESQLNITEKKYDKTTLQNRLAKLSGGVAVIKAGAATETEVKEKKMRIDDALNATKAAVEEGYVAGGGVTLFRAIKALESMKADPEQMIGVNIVKRALEEPLRQIADNAGREGAEVIAMIKSNASETYGYNAKTDTYEDLLQAGVLDPTKVVRSGLQNAASIAGMLLSTEAVVVDFDEEKDKTSAAIII.

ATP-binding positions include 30–33 (TLGP), 86–90 (DGTTT), Gly-414, and Asp-494.

Belongs to the chaperonin (HSP60) family. Forms a cylinder of 14 subunits composed of two heptameric rings stacked back-to-back. Interacts with the co-chaperonin GroES.

Its subcellular location is the cytoplasm. The catalysed reaction is ATP + H2O + a folded polypeptide = ADP + phosphate + an unfolded polypeptide.. Functionally, together with its co-chaperonin GroES, plays an essential role in assisting protein folding. The GroEL-GroES system forms a nano-cage that allows encapsulation of the non-native substrate proteins and provides a physical environment optimized to promote and accelerate protein folding. The protein is Chaperonin GroEL of Methanospirillum hungatei JF-1 (strain ATCC 27890 / DSM 864 / NBRC 100397 / JF-1).